The primary structure comprises 396 residues: Tryptophan synthase beta chain (396 aa).

An N6-(pyridoxal phosphate)lysine modification is found at Lys86.

It belongs to the TrpB family. In terms of assembly, tetramer of two alpha and two beta chains. Pyridoxal 5'-phosphate is required as a cofactor.

The catalysed reaction is (1S,2R)-1-C-(indol-3-yl)glycerol 3-phosphate + L-serine = D-glyceraldehyde 3-phosphate + L-tryptophan + H2O. The protein operates within amino-acid biosynthesis; L-tryptophan biosynthesis; L-tryptophan from chorismate: step 5/5. The beta subunit is responsible for the synthesis of L-tryptophan from indole and L-serine. The polypeptide is Tryptophan synthase beta chain (Sodalis glossinidius (strain morsitans)).